The sequence spans 131 residues: uncharacterized protein (131 aa).

The N-terminal stretch at methionine 1–glycine 26 is a signal peptide.

This is an uncharacterized protein from Bacillus subtilis (strain 168).